We begin with the raw amino-acid sequence, 343 residues long: Probable dual-specificity RNA methyltransferase RlmN (343 aa).

Residue Glu-83 is the Proton acceptor of the active site. One can recognise a Radical SAM core domain in the interval 89-323; the sequence is YLDRKTICVS…VSVRRSRGKD (235 aa). The cysteines at positions 96 and 328 are disulfide-linked. Residues Cys-103, Cys-107, and Cys-110 each contribute to the [4Fe-4S] cluster site. S-adenosyl-L-methionine contacts are provided by residues 153 to 154, Ser-185, 209 to 211, and Asn-285; these read GE and SLH. Catalysis depends on Cys-328, which acts as the S-methylcysteine intermediate.

This sequence belongs to the radical SAM superfamily. RlmN family. [4Fe-4S] cluster is required as a cofactor.

It is found in the cytoplasm. The enzyme catalyses adenosine(2503) in 23S rRNA + 2 reduced [2Fe-2S]-[ferredoxin] + 2 S-adenosyl-L-methionine = 2-methyladenosine(2503) in 23S rRNA + 5'-deoxyadenosine + L-methionine + 2 oxidized [2Fe-2S]-[ferredoxin] + S-adenosyl-L-homocysteine. It carries out the reaction adenosine(37) in tRNA + 2 reduced [2Fe-2S]-[ferredoxin] + 2 S-adenosyl-L-methionine = 2-methyladenosine(37) in tRNA + 5'-deoxyadenosine + L-methionine + 2 oxidized [2Fe-2S]-[ferredoxin] + S-adenosyl-L-homocysteine. Specifically methylates position 2 of adenine 2503 in 23S rRNA and position 2 of adenine 37 in tRNAs. The sequence is that of Probable dual-specificity RNA methyltransferase RlmN from Deinococcus deserti (strain DSM 17065 / CIP 109153 / LMG 22923 / VCD115).